Reading from the N-terminus, the 62-residue chain is Large ribosomal subunit protein bL28 (62 aa).

It belongs to the bacterial ribosomal protein bL28 family.

The protein is Large ribosomal subunit protein bL28 of Staphylococcus haemolyticus (strain JCSC1435).